An 892-amino-acid chain; its full sequence is MSGVNEIRSTFLNFFAENGHEIVPSSPLVPRNDPTLMFTNAGMVQFKNVFTGVEKRPYQRATTSQKCVRAGGKHNDLDNVGYTARHLTFFEMLGNFSFGDYFKERAIELAWKLITKDFGLNKDKLLVTVYHTDDEAHGLWKKIAGFSDDRIIRIPTSDNFWAMGDTGPCGPCSEIFIDRGDHIWGGPPGSPEEDGDRFLEFWNLVFMQYEQVTKEERVDLPRPSIDTGMGLERMACIMQGVDSVFETDLFRHLIDATASALGSGPNEQTVASFRVIADHLRSSAFLVSDGVLPSNEGRGYVLRRIMRRAMRHAQLLGAKEPLMHRLVWALVREMGQAYPELMRAEKLIEETLRLEETRFRKTLTRGLAILDEKSASLKKGDMFDGDVAFTLYDTYGFPLDLTQDALKSRGIGVDQSAFTDAMERQKAKARESWKGSGEAASEAIWFPLREKLGATEFLGYETESAEGVVSALVKDGQEAASLKAGETGALVLNQTPFYAESGGQVGDTGVLLGEGGVKFRVTDTQKKLGDLFVHVGTVESGELKLGTALQLEVDHSRRSSIRAHHSATHLIHEALRQVLGDHIAQRGSMVAPDRLRFDFVHPKPITAEELARVEDIANDVVLENDEVTTRVMGVDEAREAGARALFGEKYGDEVRVVSMGRTARERGANALGWSVELCGGTHVRRTGDIGLITLTGESAVASGVRRIEALTGNYARKHANDTMALAKTAANELRTSIDDVPARITALMEERKKLERELSDARKKLAMGGGAAASNGAASGVREVGDVKLMARAVEGIEMKDLKSLADDGKKQIGSGVVAIVGVTGDGKAGIVVGVTADLTARFNAVNLVRVASEALGGKGGGGRPDMAQAGGPDGAKAPEALAAIEKAMAGA.

Zn(2+)-binding residues include histidine 565, histidine 569, cysteine 678, and histidine 682. A disordered region spans residues 857–876 (GGKGGGGRPDMAQAGGPDGA).

This sequence belongs to the class-II aminoacyl-tRNA synthetase family. Requires Zn(2+) as cofactor.

Its subcellular location is the cytoplasm. It catalyses the reaction tRNA(Ala) + L-alanine + ATP = L-alanyl-tRNA(Ala) + AMP + diphosphate. In terms of biological role, catalyzes the attachment of alanine to tRNA(Ala) in a two-step reaction: alanine is first activated by ATP to form Ala-AMP and then transferred to the acceptor end of tRNA(Ala). Also edits incorrectly charged Ser-tRNA(Ala) and Gly-tRNA(Ala) via its editing domain. This is Alanine--tRNA ligase from Bradyrhizobium diazoefficiens (strain JCM 10833 / BCRC 13528 / IAM 13628 / NBRC 14792 / USDA 110).